The primary structure comprises 367 residues: Pre-small/secreted glycoprotein (367 aa).

The first 33 residues, 1 to 33, serve as a signal peptide directing secretion; the sequence is MGSGYQLLQLPRERFRKTSFLVWVIILFQRAIS. Residue N41 is glycosylated (N-linked (GlcNAc...) asparagine; by host). 2 disulfide bridges follow: C109–C136 and C122–C148. Residues N205, N239, N258, and N269 are each glycosylated (N-linked (GlcNAc...) asparagine; by host).

This sequence belongs to the filoviruses glycoprotein family. As to quaternary structure, homodimer; disulfide-linked. The homodimers are linked by two disulfide bonds in a parallel orientation. In terms of assembly, monomer. This precursor is processed into mature sGP and delta-peptide by host furin or furin-like proteases. The cleavage site corresponds to the furin optimal cleavage sequence [KR]-X-[KR]-R. Post-translationally, N-glycosylated. In terms of processing, O-glycosylated.

Its subcellular location is the secreted. Its function is as follows. Seems to possess an anti-inflammatory activity as it can reverse the barrier-decreasing effects of TNF alpha. Might therefore contribute to the lack of inflammatory reaction seen during infection in spite the of extensive necrosis and massive virus production. Does not seem to be involved in activation of primary macrophages. Does not seem to interact specifically with neutrophils. Viroporin that permeabilizes mammalian cell plasma membranes. It acts by altering permeation of ionic compounds and small molecules. This activity may lead to viral enterotoxic activity. The polypeptide is Pre-small/secreted glycoprotein (GP) (Reston ebolavirus (strain Siena/Philippine-92) (REBOV)).